The primary structure comprises 255 residues: Putative gene 39 protein (255 aa).

This Bacillus phage SP01 (Bacteriophage SP01) protein is Putative gene 39 protein (39).